A 352-amino-acid polypeptide reads, in one-letter code: Mitochondrial hydrolase YKR070W (352 aa).

This sequence belongs to the HAD-like hydrolase superfamily.

It is found in the mitochondrion. The chain is Mitochondrial hydrolase YKR070W from Saccharomyces cerevisiae (strain ATCC 204508 / S288c) (Baker's yeast).